The sequence spans 763 residues: Phosphoglycerol transferase I (763 aa).

The next 4 helical transmembrane spans lie at 1-21 (MSEL…AWKA), 26-46 (WWFA…ITLY), 77-97 (ILPG…LGWV), and 108-128 (FGYS…SPAF).

Belongs to the OpgB family.

It localises to the cell inner membrane. It catalyses the reaction a phosphatidylglycerol + a membrane-derived-oligosaccharide D-glucose = a 1,2-diacyl-sn-glycerol + a membrane-derived-oligosaccharide 6-(glycerophospho)-D-glucose.. The protein operates within glycan metabolism; osmoregulated periplasmic glucan (OPG) biosynthesis. Transfers a phosphoglycerol residue from phosphatidylglycerol to the membrane-bound nascent glucan backbones. This Citrobacter koseri (strain ATCC BAA-895 / CDC 4225-83 / SGSC4696) protein is Phosphoglycerol transferase I.